A 557-amino-acid chain; its full sequence is Syntaxin-binding protein 4 (557 aa).

2 positions are modified to phosphoserine: S10 and S12. The PDZ domain maps to 19-105 (AFRVITVTKE…RSESPWEIAF (87 aa)). At S99 the chain carries Phosphoserine; by PKB/AKT2. Over residues 142 to 154 (PSETLLPKTSSTP) the composition is skewed to low complexity. A disordered region spans residues 142–214 (PSETLLPKTS…SGPQGKISLN (73 aa)). Residues 179 to 194 (SPITSLDNSPADTSNA) are compositionally biased toward polar residues. A Phosphoserine modification is found at S216. Positions 298–408 (ADEVGKLRQE…NKESVQDLRK (111 aa)) form a coiled coil. S467 is modified (phosphoserine). The region spanning 500–533 (DCLPYGWEEAYTADGIKYFINHVTQTTSWIHPVM) is the WW domain.

Interacts with STX4A. In terms of processing, phosphorylated on Ser-99 by PKB/AKT2 after insulin treatment. Phosphorylation on Ser-99 abolishes the interaction with STX4A. In terms of tissue distribution, detected in skeletal muscle, heart, testis, adipocytes and pancreatic islet cells.

The protein resides in the cytoplasm. Plays a role in the translocation of transport vesicles from the cytoplasm to the plasma membrane. Inhibits the translocation of SLC2A4 from intracellular vesicles to the plasma membrane by STX4A binding and preventing the interaction between STX4A and VAMP2. Stimulation with insulin disrupts the interaction with STX4A, leading to increased levels of SLC2A4 at the plasma membrane. May also play a role in the regulation of insulin release by pancreatic beta cells after stimulation by glucose. The chain is Syntaxin-binding protein 4 (Stxbp4) from Mus musculus (Mouse).